The primary structure comprises 227 residues: 7-cyano-7-deazaguanine synthase (227 aa).

Residue 8 to 18 (FSGGQDSTTCL) participates in ATP binding. Residues cysteine 187, cysteine 196, cysteine 199, and cysteine 202 each contribute to the Zn(2+) site.

Belongs to the QueC family. The cofactor is Zn(2+).

It carries out the reaction 7-carboxy-7-deazaguanine + NH4(+) + ATP = 7-cyano-7-deazaguanine + ADP + phosphate + H2O + H(+). It participates in purine metabolism; 7-cyano-7-deazaguanine biosynthesis. Functionally, catalyzes the ATP-dependent conversion of 7-carboxy-7-deazaguanine (CDG) to 7-cyano-7-deazaguanine (preQ(0)). This is 7-cyano-7-deazaguanine synthase from Shewanella pealeana (strain ATCC 700345 / ANG-SQ1).